Consider the following 627-residue polypeptide: Phosphomethylpyrimidine synthase (627 aa).

A disordered region spans residues 1–21 (MSVQSNKNLSESAQVDQQSIQ). Residues N231, M260, Y289, H325, 345–347 (SRG), 386–389 (DGLR), and E425 each bind substrate. Zn(2+) is bound at residue H429. Y452 provides a ligand contact to substrate. A Zn(2+)-binding site is contributed by H493. [4Fe-4S] cluster-binding residues include C573, C576, and C581.

This sequence belongs to the ThiC family. Homodimer. The cofactor is [4Fe-4S] cluster.

It carries out the reaction 5-amino-1-(5-phospho-beta-D-ribosyl)imidazole + S-adenosyl-L-methionine = 4-amino-2-methyl-5-(phosphooxymethyl)pyrimidine + CO + 5'-deoxyadenosine + formate + L-methionine + 3 H(+). It participates in cofactor biosynthesis; thiamine diphosphate biosynthesis. Its function is as follows. Catalyzes the synthesis of the hydroxymethylpyrimidine phosphate (HMP-P) moiety of thiamine from aminoimidazole ribotide (AIR) in a radical S-adenosyl-L-methionine (SAM)-dependent reaction. In Stutzerimonas stutzeri (strain A1501) (Pseudomonas stutzeri), this protein is Phosphomethylpyrimidine synthase.